Here is a 270-residue protein sequence, read N- to C-terminus: Non-homologous end joining protein Ku (270 aa).

The region spanning 10-194 (SLGLLNIGIK…NYPIQKQELT (185 aa)) is the Ku domain.

This sequence belongs to the prokaryotic Ku family. Homodimer. Interacts with LigD.

With LigD forms a non-homologous end joining (NHEJ) DNA repair enzyme, which repairs dsDNA breaks with reduced fidelity. Binds linear dsDNA with 5'- and 3'- overhangs but not closed circular dsDNA nor ssDNA. Recruits and stimulates the ligase activity of LigD. This Bacillus thuringiensis subsp. konkukian (strain 97-27) protein is Non-homologous end joining protein Ku.